The sequence spans 191 residues: Fe/S biogenesis protein NfuA (191 aa).

[4Fe-4S] cluster is bound by residues cysteine 149 and cysteine 152.

This sequence belongs to the NfuA family. As to quaternary structure, homodimer. [4Fe-4S] cluster serves as cofactor.

In terms of biological role, involved in iron-sulfur cluster biogenesis. Binds a 4Fe-4S cluster, can transfer this cluster to apoproteins, and thereby intervenes in the maturation of Fe/S proteins. Could also act as a scaffold/chaperone for damaged Fe/S proteins. The protein is Fe/S biogenesis protein NfuA of Edwardsiella ictaluri (strain 93-146).